The following is a 104-amino-acid chain: L-rhamnose mutarotase (104 aa).

Tyrosine 18 serves as a coordination point for substrate. The active-site Proton donor is the histidine 22. Substrate contacts are provided by residues tyrosine 41 and 76-77 (WW).

The protein belongs to the rhamnose mutarotase family. As to quaternary structure, homodimer.

Its subcellular location is the cytoplasm. The catalysed reaction is alpha-L-rhamnose = beta-L-rhamnose. It participates in carbohydrate metabolism; L-rhamnose metabolism. In terms of biological role, L-rhamnose mutarotase involved in ulvan degradation. Ulvan is the main polysaccharide component of the Ulvales (green seaweed) cell wall. It is composed of disaccharide building blocks comprising 3-sulfated rhamnose (Rha3S) linked to D-glucuronic acid (GlcA), L-iduronic acid (IduA), or D-xylose (Xyl). L-rhamnose mutarotase catalyzes the anomeric conversion of alpha- to beta-L-rhamnose. In Formosa agariphila (strain DSM 15362 / KCTC 12365 / LMG 23005 / KMM 3901 / M-2Alg 35-1), this protein is L-rhamnose mutarotase (rhaM).